The primary structure comprises 621 residues: Frizzled and smoothened-like protein H (621 aa).

The N-terminal stretch at 1-21 (MNLKFYNLIFFISFLICCIHG) is a signal peptide. Topologically, residues 22-246 (QRYLPVEGGK…VWNQIFKIND (225 aa)) are extracellular. One can recognise an FZ domain in the interval 27 to 166 (VEGGKCEKYI…IEWVKYNLTI (140 aa)). Intrachain disulfides connect cysteine 32–cysteine 103 and cysteine 46–cysteine 96. N-linked (GlcNAc...) asparagine glycans are attached at residues asparagine 60, asparagine 107, asparagine 163, asparagine 176, and asparagine 206. Residues 247-267 (VLSSISLACTLILLFTFGILN) traverse the membrane as a helical segment. Residues 268-277 (PKLNRFDKKN) are Cytoplasmic-facing. Residues 278-298 (LFFIAGVFGMSVSGVLIAANG) form a helical membrane-spanning segment. Residues 299-318 (SEKTVCPTPERYAVNTDRVC) are Extracellular-facing. The chain crosses the membrane as a helical span at residues 319–339 (VASGFLVHFSALFAILWWTIG). At 340-359 (LADVYYGIKFVGKKIKIKVR) the chain is on the cytoplasmic side. The helical transmembrane segment at 360–380 (YYLLATLTISLAFTLVPLGTG) threads the bilayer. At 381–400 (QYQAGLSNVMCFLKDEIYQS) the chain is on the extracellular side. The chain crosses the membrane as a helical span at residues 401-421 (MTFFVPLGICLTMGTILMILV). The Cytoplasmic portion of the chain corresponds to 422 to 464 (MREIYVIVKSNSTSSSFSSSSSKSKSKSKSSDSISYLKLQVKP). A helical membrane pass occupies residues 465–485 (MLNIILFYFTFLYLFLFVRVI). Over 486-520 (NSRYQEYEDSAIPYMLCLAKGGGDSCRLKGPSAGS) the chain is Extracellular. The chain crosses the membrane as a helical span at residues 521–541 (LGYFAYCLRIYGIYLFIISFL). The Cytoplasmic segment spans residues 542–621 (SSRTIKIWKE…RNYNTDDDDL (80 aa)). Residues 575–594 (FSSSKNTSTTQNSTLNNTES) show a composition bias toward low complexity. Residues 575–603 (FSSSKNTSTTQNSTLNNTESDTSKRGNSS) form a disordered region.

This sequence belongs to the G-protein coupled receptor Fz/Smo family.

The protein resides in the membrane. This is Frizzled and smoothened-like protein H (fslH) from Dictyostelium discoideum (Social amoeba).